The following is a 562-amino-acid chain: SPI-1 type 3 secretion system secretin (562 aa).

The first 24 residues, Met1–Ser24, serve as a signal peptide directing secretion.

The protein belongs to the bacterial secretin family. T3SS SctC subfamily. In terms of assembly, the core secretion machinery of the T3SS is composed of approximately 20 different proteins, including cytoplasmic components, a base, an export apparatus and a needle. This subunit is part of the base, which anchors the injectisome in the bacterial cell envelope. Forms a stable homooligomeric complex. The complex is composed of 15 subunits.

It localises to the cell outer membrane. Its function is as follows. Component of the type III secretion system (T3SS), also called injectisome, which is used to inject bacterial effector proteins into eukaryotic host cells. Forms a ring-shaped multimeric structure with an apparent central pore in the outer membrane. The sequence is that of SPI-1 type 3 secretion system secretin from Salmonella typhimurium (strain LT2 / SGSC1412 / ATCC 700720).